A 233-amino-acid chain; its full sequence is N-(5'-phosphoribosyl)anthranilate isomerase (233 aa).

It belongs to the TrpF family.

The catalysed reaction is N-(5-phospho-beta-D-ribosyl)anthranilate = 1-(2-carboxyphenylamino)-1-deoxy-D-ribulose 5-phosphate. The protein operates within amino-acid biosynthesis; L-tryptophan biosynthesis; L-tryptophan from chorismate: step 3/5. The protein is N-(5'-phosphoribosyl)anthranilate isomerase of Synechococcus sp. (strain JA-2-3B'a(2-13)) (Cyanobacteria bacterium Yellowstone B-Prime).